Consider the following 226-residue polypeptide: ATP-dependent dethiobiotin synthetase BioD (226 aa).

12 to 17 contacts ATP; it reads EVGKTV. Residue Thr-16 participates in Mg(2+) binding. Lys-39 is an active-site residue. Residue Thr-43 coordinates substrate. ATP-binding positions include Asp-47, 108 to 111, 168 to 169, and 200 to 202; these read EALG, NC, and PYI. Mg(2+) contacts are provided by Asp-47 and Glu-108.

It belongs to the dethiobiotin synthetase family. As to quaternary structure, homodimer. It depends on Mg(2+) as a cofactor.

The protein localises to the cytoplasm. The enzyme catalyses (7R,8S)-7,8-diammoniononanoate + CO2 + ATP = (4R,5S)-dethiobiotin + ADP + phosphate + 3 H(+). It carries out the reaction (7R,8S)-8-amino-7-(carboxyamino)nonanoate + ATP = (4R,5S)-dethiobiotin + ADP + phosphate + H(+). It participates in cofactor biosynthesis; biotin biosynthesis; biotin from 7,8-diaminononanoate: step 1/2. Catalyzes a mechanistically unusual reaction, the ATP-dependent insertion of CO2 between the N7 and N8 nitrogen atoms of 7,8-diaminopelargonic acid (DAPA, also called 7,8-diammoniononanoate) to form a ureido ring. This cyanobacterium does not encode bioA (which catalyzes the formation of the precursor for this reaction in the cannonical pathway), instead it encodes bioU, which replaces bioA and also performs the first half of the cannonical BioD reaction. Thus in this organism BioD has a different substrate. This Gloeothece citriformis (strain PCC 7424) (Cyanothece sp. (strain PCC 7424)) protein is ATP-dependent dethiobiotin synthetase BioD.